Reading from the N-terminus, the 398-residue chain is MEPLIELKDLEYAYPYASPALSNISLCIQRGEKIALVGSNGAGKSTLLLTLNGMIRPDKGTVTIYGKPVSYDRNSLRKIRQKIGFVFQDPDVQIIAPTVWQDVAFGPVNLDYSEEQVQQAVSNALHSVGLEGFEKRPPYHLSGGEKKRVAIAGILAMDPDVLILDEPTSMLDPAGSEDIMDLLDELNHQGKTIIISTHDVELAYPWADRIILMEKGRIIASGTPEEAFSDKELVRRARLKTPILLELSQELKSRGMKTPGTLPRTVLDIIRIIEHNHHGSIRLSDNGYGTIHVGDVDLISGSHIQAILARTSCDTIGVMGSRAKICARQWGLIPDISYAVIDKCILQAMNGRTSLILTTGGMVTRVFERVSMFNQTNNRSIPVRSLIGDEIPDDLSGI.

The ABC transporter domain maps to 5–240 (IELKDLEYAY…KELVRRARLK (236 aa)). ATP is bound at residue 38 to 45 (GSNGAGKS).

It belongs to the ABC transporter superfamily. Energy-coupling factor EcfA family. In terms of assembly, forms a stable energy-coupling factor (ECF) transporter complex composed of 2 membrane-embedded substrate-binding proteins (S component), 2 ATP-binding proteins (A component) and 2 transmembrane proteins (T component).

It is found in the cell membrane. ATP-binding (A) component of a common energy-coupling factor (ECF) ABC-transporter complex. Unlike classic ABC transporters this ECF transporter provides the energy necessary to transport a number of different substrates. In Methanospirillum hungatei JF-1 (strain ATCC 27890 / DSM 864 / NBRC 100397 / JF-1), this protein is Energy-coupling factor transporter ATP-binding protein EcfA2.